Reading from the N-terminus, the 305-residue chain is UDP-N-acetylenolpyruvoylglucosamine reductase (305 aa).

In terms of domain architecture, FAD-binding PCMH-type spans 37-202 (GIGGPARFLA…LSVTFNLEPK (166 aa)). The active site involves Arg-183.

This sequence belongs to the MurB family. Requires FAD as cofactor.

The protein resides in the cytoplasm. The catalysed reaction is UDP-N-acetyl-alpha-D-muramate + NADP(+) = UDP-N-acetyl-3-O-(1-carboxyvinyl)-alpha-D-glucosamine + NADPH + H(+). It participates in cell wall biogenesis; peptidoglycan biosynthesis. Functionally, cell wall formation. In Rhodopirellula baltica (strain DSM 10527 / NCIMB 13988 / SH1), this protein is UDP-N-acetylenolpyruvoylglucosamine reductase.